The sequence spans 84 residues: Acyl carrier protein (84 aa).

The region spanning 4–80 is the Carrier domain; that stretch reads SETFEKVKKI…EAVDYINNQV (77 aa). S40 is modified (O-(pantetheine 4'-phosphoryl)serine).

It belongs to the acyl carrier protein (ACP) family. Post-translationally, 4'-phosphopantetheine is transferred from CoA to a specific serine of apo-ACP by AcpS. This modification is essential for activity because fatty acids are bound in thioester linkage to the sulfhydryl of the prosthetic group.

It is found in the cytoplasm. It functions in the pathway lipid metabolism; fatty acid biosynthesis. Functionally, carrier of the growing fatty acid chain in fatty acid biosynthesis. The protein is Acyl carrier protein of Nostoc sp. (strain PCC 7120 / SAG 25.82 / UTEX 2576).